The following is an 843-amino-acid chain: Ribosome biogenesis protein ERB1 (843 aa).

Disordered regions lie at residues 36-189 (KKAA…RYIY) and 364-419 (ADES…REYL). 3 stretches are compositionally biased toward acidic residues: residues 77–92 (VDED…YDLE), 106–139 (SDSE…EVPS), and 163–172 (ESNDLSDDNE). A compositionally biased stretch (basic and acidic residues) spans 173 to 183 (PNYRIEKDANG). A compositionally biased stretch (pro residues) spans 379–396 (PKLPPPGYEESYHPPPEY). Positions 397–406 (LPDKKEKEEW) are enriched in basic and acidic residues. WD repeat units lie at residues 487 to 526 (GHRG…QLWS), 530 to 570 (SDED…LELE), 668 to 706 (KGGG…LVKI), 709 to 754 (PGAR…RPYK), 758 to 797 (YHQK…DLLS), and 813 to 843 (TGDL…RLWM).

The protein belongs to the WD repeat BOP1/ERB1 family. Component of the NOP7 complex, composed of ERB1, NOP7 and YTM1. The complex is held together by ERB1, which interacts with NOP7 via its N-terminal domain and with YTM1 via a high-affinity interaction between the seven-bladed beta-propeller domains of the 2 proteins. The NOP7 complex associates with the 66S pre-ribosome.

It is found in the nucleus. Its subcellular location is the nucleolus. The protein resides in the nucleoplasm. In terms of biological role, component of the NOP7 complex, which is required for maturation of the 25S and 5.8S ribosomal RNAs and formation of the 60S ribosome. The chain is Ribosome biogenesis protein ERB1 from Coccidioides immitis (strain RS) (Valley fever fungus).